Reading from the N-terminus, the 198-residue chain is Phosphoheptose isomerase (198 aa).

Residues 36-198 enclose the SIS domain; that stretch reads MIGSLLNNGK…DCLLLGVEDQ (163 aa). 51 to 53 provides a ligand contact to substrate; the sequence is NGG. Residues His-60 and Glu-64 each contribute to the Zn(2+) site. Substrate-binding positions include Glu-64, 93–94, 119–121, Ser-124, and Gln-174; these read ND and STS. Zn(2+) is bound by residues Gln-174 and His-182.

The protein belongs to the SIS family. GmhA subfamily. As to quaternary structure, homotetramer. The cofactor is Zn(2+).

The protein resides in the cytoplasm. It carries out the reaction 2 D-sedoheptulose 7-phosphate = D-glycero-alpha-D-manno-heptose 7-phosphate + D-glycero-beta-D-manno-heptose 7-phosphate. The protein operates within carbohydrate biosynthesis; D-glycero-D-manno-heptose 7-phosphate biosynthesis; D-glycero-alpha-D-manno-heptose 7-phosphate and D-glycero-beta-D-manno-heptose 7-phosphate from sedoheptulose 7-phosphate: step 1/1. In terms of biological role, catalyzes the isomerization of sedoheptulose 7-phosphate in D-glycero-D-manno-heptose 7-phosphate. This is Phosphoheptose isomerase from Aromatoleum aromaticum (strain DSM 19018 / LMG 30748 / EbN1) (Azoarcus sp. (strain EbN1)).